The following is a 104-amino-acid chain: Large ribosomal subunit protein bL21 (104 aa).

This sequence belongs to the bacterial ribosomal protein bL21 family. In terms of assembly, part of the 50S ribosomal subunit. Contacts protein L20.

This protein binds to 23S rRNA in the presence of protein L20. The protein is Large ribosomal subunit protein bL21 of Helicobacter pylori (strain HPAG1).